The chain runs to 537 residues: Efflux pump ustT (537 aa).

Basic and acidic residues predominate over residues 1 to 25; sequence MAKEAQSLHELDNMKEKEVDQEKKA. Positions 1-50 are disordered; that stretch reads MAKEAQSLHELDNMKEKEVDQEKKAPTSVGDQEEHDDPKKQASHSQNVSE. N-linked (GlcNAc...) asparagine glycosylation occurs at N47. Helical transmembrane passes span 71 to 91, 104 to 124, 137 to 157, 162 to 182, 193 to 213, 236 to 256, 266 to 286, and 304 to 324; these read PLAMAVIMVAISMGMFLVSLL, WVYMSLVFIFVIGSAVGAGAM, GIGLGGVLSGSTILIAENAPL, MFLGILMATMSISAIVGPLIG, WCFILNIPIGGAIIAVLFFFV, LGSALLLPAVVCLILALQWAG, IILLFVFGGLLSIGFVVSQML, and FGSFLFSAMTGGAMLVVTYWI. N333 carries N-linked (GlcNAc...) asparagine glycosylation. 4 helical membrane-spanning segments follow: residues 339–359, 363–383, 397–417, and 430–450; these read AGIRTIALVLSQAVGAIMGGG, LIGYPPPIMMISATFIAVGAG, WIGYQILMGLGLGFGTQQASL, and TAISLIFFGMQLGGSIFVCIG. The N-linked (GlcNAc...) asparagine glycan is linked to N501. A helical membrane pass occupies residues 507–527; sequence TFYVALAAGITSMLSAFLVQW.

It belongs to the major facilitator superfamily. TCR/Tet family.

The protein localises to the cell membrane. Its function is as follows. Efflux pump; part of the gene cluster that mediates the biosynthesis of ustilaginoidins, dimeric gamma-naphthopyrones isolated from different fungal species. This is Efflux pump ustT from Ustilaginoidea virens (Rice false smut fungus).